Here is a 347-residue protein sequence, read N- to C-terminus: Phosphoribosylformylglycinamidine cyclo-ligase (347 aa).

Belongs to the AIR synthase family.

The protein localises to the cytoplasm. The enzyme catalyses 2-formamido-N(1)-(5-O-phospho-beta-D-ribosyl)acetamidine + ATP = 5-amino-1-(5-phospho-beta-D-ribosyl)imidazole + ADP + phosphate + H(+). The protein operates within purine metabolism; IMP biosynthesis via de novo pathway; 5-amino-1-(5-phospho-D-ribosyl)imidazole from N(2)-formyl-N(1)-(5-phospho-D-ribosyl)glycinamide: step 2/2. The sequence is that of Phosphoribosylformylglycinamidine cyclo-ligase from Prochlorococcus marinus (strain MIT 9312).